Reading from the N-terminus, the 713-residue chain is Leucine-rich repeat neuronal protein 2 (713 aa).

The signal sequence occupies residues 1 to 18; it reads MRLLVAPLLLAWVAGATA. At 19–630 the chain is on the extracellular side; that stretch reads AVPVVPWHVP…CHRALGDRPG (612 aa). In terms of domain architecture, LRRNT spans 20–69; sequence VPVVPWHVPCPPQCACQIRPWYTPRSSYREATTVDCNDLFLTAVPPALPA. LRR repeat units lie at residues 70–91, 94–115, 118–139, 142–163, 166–187, 190–211, 214–235, 238–259, 262–283, 286–305, 311–333, and 336–357; these read GTQT…ELGY, NLTE…DFHA, QLLS…SFAG, SLQE…AFSG, NLLR…WFEM, NLEI…NFRP, NLRS…ALEG, SLES…ALEQ, GLKF…DFAN, HLKE…DKFA, ELTK…AFHH, and QMET…TVES. A glycan (N-linked (GlcNAc...) asparagine) is linked at Asn-94. An LRRCT domain is found at 369–422; it reads NPIRCDCVIRWANATGTRVRFIEPQSTLCAEPPDLQRLPVREVPFREMTDHCLP. A glycan (N-linked (GlcNAc...) asparagine) is linked at Asn-381. An Ig-like C2-type domain is found at 422–511; that stretch reads PLISPRSFPP…LVGADTKTVS (90 aa). The cysteines at positions 445 and 497 are disulfide-linked. Asn-555 and Asn-583 each carry an N-linked (GlcNAc...) asparagine glycan. Residues 631–651 form a helical membrane-spanning segment; sequence LIAILALAVLLLAAGLAAHLG. The Cytoplasmic segment spans residues 652 to 713; that stretch reads TGQPRKGVGG…TLLPPLSQNS (62 aa).

Overamplified in malignant gliomas.

The protein resides in the membrane. This Homo sapiens (Human) protein is Leucine-rich repeat neuronal protein 2 (LRRN2).